The primary structure comprises 166 residues: MAAATFWFVLRGWRTGVPPGCGLRRLSQTQGTPDYPRFLESVDEYRFVERLLPPTSIPKPPKHEHYPTPCGWQPPRDPPPNLPYFVRRSRMHNIPVYRDITHGNRQMTVIRKVEGDIWALQKDVEDFLSPLLGKTPITQVNEVTGTLRIKGYFDQQLKAWLLEKGF.

This sequence belongs to the mitochondrion-specific ribosomal protein mL49 family. In terms of assembly, component of the mitochondrial ribosome large subunit (39S) which comprises a 16S rRNA and about 50 distinct proteins. Interacts with OXA1L.

Its subcellular location is the mitochondrion. The protein is Large ribosomal subunit protein mL49 (MRPL49) of Bos taurus (Bovine).